The chain runs to 509 residues: Histidine--tRNA ligase, cytoplasmic (509 aa).

Ala-2 is modified (N-acetylalanine). In terms of domain architecture, WHEP-TRS spans 3 to 59; the sequence is ERAALEELVKLQGERVRGLKQQKASAELIEEEVAKLLKLKAQLGPDESKQKFVLKTP. The residue at position 66 (Ser-66) is a Phosphoserine. L-histidine contacts are provided by residues 130–132, Arg-157, Gln-173, Asp-177, Arg-326, and 330–331; these read DLT and YY. Ser-356 is modified (phosphoserine).

The protein belongs to the class-II aminoacyl-tRNA synthetase family. In terms of assembly, homodimer. As to expression, brain, heart, liver and kidney.

The protein resides in the cytoplasm. It carries out the reaction tRNA(His) + L-histidine + ATP = L-histidyl-tRNA(His) + AMP + diphosphate + H(+). Catalyzes the ATP-dependent ligation of histidine to the 3'-end of its cognate tRNA, via the formation of an aminoacyl-adenylate intermediate (His-AMP). Plays a role in axon guidance. The chain is Histidine--tRNA ligase, cytoplasmic from Homo sapiens (Human).